We begin with the raw amino-acid sequence, 442 residues long: D-serine dehydratase (442 aa).

At Lys-118 the chain carries N6-(pyridoxal phosphate)lysine.

The protein belongs to the serine/threonine dehydratase family. DsdA subfamily. As to quaternary structure, monomer. Pyridoxal 5'-phosphate is required as a cofactor.

The enzyme catalyses D-serine = pyruvate + NH4(+). The sequence is that of D-serine dehydratase from Escherichia coli O139:H28 (strain E24377A / ETEC).